A 447-amino-acid chain; its full sequence is Probable aspartic protease At2g35615 (447 aa).

Positions Met1–Ser20 are cleaved as a signal peptide. Asn25 carries an N-linked (GlcNAc...) asparagine glycan. The 355-residue stretch at Phe85 to Gln439 folds into the Peptidase A1 domain. Asp103 is an active-site residue. Residue Asn251 is glycosylated (N-linked (GlcNAc...) asparagine). Residue Asp326 is part of the active site.

The protein belongs to the peptidase A1 family.

The protein resides in the secreted. The sequence is that of Probable aspartic protease At2g35615 from Arabidopsis thaliana (Mouse-ear cress).